We begin with the raw amino-acid sequence, 177 residues long: Cyclic pyranopterin monophosphate synthase 3 (177 aa).

Substrate is bound by residues Leu79–His81 and Met116–Glu117. The active site involves Asp131. The tract at residues Lys150–Cys177 is disordered.

Belongs to the MoaC family. In terms of assembly, homohexamer; trimer of dimers.

It carries out the reaction (8S)-3',8-cyclo-7,8-dihydroguanosine 5'-triphosphate = cyclic pyranopterin phosphate + diphosphate. The protein operates within cofactor biosynthesis; molybdopterin biosynthesis. Catalyzes the conversion of (8S)-3',8-cyclo-7,8-dihydroguanosine 5'-triphosphate to cyclic pyranopterin monophosphate (cPMP). In Mycobacterium bovis (strain ATCC BAA-935 / AF2122/97), this protein is Cyclic pyranopterin monophosphate synthase 3 (moaC3).